A 440-amino-acid chain; its full sequence is Thymidine phosphorylase (440 aa).

The protein belongs to the thymidine/pyrimidine-nucleoside phosphorylase family. As to quaternary structure, homodimer.

It carries out the reaction thymidine + phosphate = 2-deoxy-alpha-D-ribose 1-phosphate + thymine. It functions in the pathway pyrimidine metabolism; dTMP biosynthesis via salvage pathway; dTMP from thymine: step 1/2. Functionally, the enzymes which catalyze the reversible phosphorolysis of pyrimidine nucleosides are involved in the degradation of these compounds and in their utilization as carbon and energy sources, or in the rescue of pyrimidine bases for nucleotide synthesis. This is Thymidine phosphorylase from Proteus mirabilis (strain HI4320).